Reading from the N-terminus, the 29-residue chain is uncharacterized protein (29 aa).

This is an uncharacterized protein from Saccharomyces cerevisiae (strain ATCC 204508 / S288c) (Baker's yeast).